A 184-amino-acid chain; its full sequence is Shikimate kinase (184 aa).

12–17 (GSGKST) contacts ATP. Ser16 is a binding site for Mg(2+). Asp34, Arg58, and Gly80 together coordinate substrate. Arg117 provides a ligand contact to ATP. Position 136 (Arg136) interacts with substrate. Arg153 is an ATP binding site. Residues 164 to 184 (SRLDDPTPNTSPSSTASGAAT) form a disordered region. Residues 169-184 (PTPNTSPSSTASGAAT) show a composition bias toward low complexity.

It belongs to the shikimate kinase family. As to quaternary structure, monomer. Requires Mg(2+) as cofactor.

The protein resides in the cytoplasm. It carries out the reaction shikimate + ATP = 3-phosphoshikimate + ADP + H(+). It functions in the pathway metabolic intermediate biosynthesis; chorismate biosynthesis; chorismate from D-erythrose 4-phosphate and phosphoenolpyruvate: step 5/7. Its function is as follows. Catalyzes the specific phosphorylation of the 3-hydroxyl group of shikimic acid using ATP as a cosubstrate. This chain is Shikimate kinase, found in Mycobacterium ulcerans (strain Agy99).